The following is a 305-amino-acid chain: uncharacterized protein (305 aa).

An N-terminal signal peptide occupies residues 1-29 (MKKWFSSISKKKVSFSTLLLLGSGIVLSS). A lipid anchor (N-palmitoyl cysteine) is attached at Cys30. Cys30 carries S-diacylglycerol cysteine lipidation. The interval 234–265 (FYNPDNSNGSNAPGSNQPNQDSGNNGSTTPAA) is disordered. Polar residues predominate over residues 237-258 (PDNSNGSNAPGSNQPNQDSGNN).

Its subcellular location is the cell membrane. This is an uncharacterized protein from Mycoplasma pneumoniae (strain ATCC 29342 / M129 / Subtype 1) (Mycoplasmoides pneumoniae).